The following is a 164-amino-acid chain: Cytochrome c-type biogenesis protein CcmE (164 aa).

Over 1 to 8 the chain is Cytoplasmic; it reads MNPRRKQR. The helical; Signal-anchor for type II membrane protein transmembrane segment at 9 to 29 threads the bilayer; that stretch reads LAVVGIIGFLIVSAVGLMLYA. Topologically, residues 30–164 are periplasmic; it reads LNDSIDLFYT…YESSNGAGSK (135 aa). The heme site is built by His-128 and Tyr-132. Residues 142 to 164 form a disordered region; it reads KGIKHVKPENMPTYESSNGAGSK. Over residues 154 to 164 the composition is skewed to polar residues; that stretch reads TYESSNGAGSK.

This sequence belongs to the CcmE/CycJ family.

Its subcellular location is the cell inner membrane. Heme chaperone required for the biogenesis of c-type cytochromes. Transiently binds heme delivered by CcmC and transfers the heme to apo-cytochromes in a process facilitated by CcmF and CcmH. The sequence is that of Cytochrome c-type biogenesis protein CcmE from Alteromonas mediterranea (strain DSM 17117 / CIP 110805 / LMG 28347 / Deep ecotype).